A 773-amino-acid chain; its full sequence is ATP-dependent permease MDL2, mitochondrial (773 aa).

The transit peptide at 1–90 directs the protein to the mitochondrion; it reads MLNGRLPLLR…SPISKGSARS (90 aa). Over residues 73-84 the composition is skewed to polar residues; that stretch reads PETSLPSASPIS. Positions 73–95 are disordered; that stretch reads PETSLPSASPISKGSARSAHAKE. The region spanning 119–413 is the ABC transmembrane type-1 domain; sequence LLTAILLLTI…LSTFYSEIMQ (295 aa). Helical transmembrane passes span 123-143, 170-192, and 257-277; these read ILLL…IGIV, FLSF…FILL, and VVGV…LLFF. 481 to 488 is an ATP binding site; it reads GPSGRGKS. The ABC transporter domain occupies 493-733; that stretch reads LLLRYYNPTT…DDNDNNHDND (241 aa). Basic and acidic residues-rich tracts occupy residues 706 to 733 and 740 to 762; these read KEDL…HDND and ETKD…DAAK. The interval 706-773 is disordered; sequence KEDLNESKEH…ANPIKITPQP (68 aa).

The protein belongs to the ABC transporter superfamily. ABCB family. Mitochondrial peptide exporter (TC 3.A.1.212) subfamily.

It localises to the mitochondrion inner membrane. In Saccharomyces cerevisiae (strain ATCC 204508 / S288c) (Baker's yeast), this protein is ATP-dependent permease MDL2, mitochondrial (MDL2).